A 292-amino-acid chain; its full sequence is Elongation factor Ts (292 aa).

Positions 81–84 are involved in Mg(2+) ion dislocation from EF-Tu; the sequence is TDFV.

The protein belongs to the EF-Ts family.

It localises to the cytoplasm. In terms of biological role, associates with the EF-Tu.GDP complex and induces the exchange of GDP to GTP. It remains bound to the aminoacyl-tRNA.EF-Tu.GTP complex up to the GTP hydrolysis stage on the ribosome. This is Elongation factor Ts from Acidithiobacillus ferrooxidans (strain ATCC 23270 / DSM 14882 / CIP 104768 / NCIMB 8455) (Ferrobacillus ferrooxidans (strain ATCC 23270)).